A 150-amino-acid chain; its full sequence is Protein NrdI (150 aa).

It belongs to the NrdI family.

Its function is as follows. Probably involved in ribonucleotide reductase function. This is Protein NrdI from Mycobacterium avium (strain 104).